A 503-amino-acid chain; its full sequence is Cytochrome P450 7A1 (503 aa).

The helical transmembrane segment at 4–24 (ISLIWGIAVVVSCCIWFIIGI) threads the bilayer. Cysteine 444 contributes to the heme binding site.

This sequence belongs to the cytochrome P450 family. It depends on heme as a cofactor.

The protein resides in the endoplasmic reticulum membrane. It localises to the microsome membrane. It carries out the reaction cholesterol + reduced [NADPH--hemoprotein reductase] + O2 = 7alpha-hydroxycholesterol + oxidized [NADPH--hemoprotein reductase] + H2O + H(+). The catalysed reaction is 4beta-hydroxycholesterol + reduced [NADPH--hemoprotein reductase] + O2 = 4beta,7alpha-dihydroxycholesterol + oxidized [NADPH--hemoprotein reductase] + H2O + H(+). The enzyme catalyses lathosterol + reduced [NADPH--hemoprotein reductase] + O2 = 7alpha,8alpha-epoxy-5alpha-cholestan-3beta-ol + oxidized [NADPH--hemoprotein reductase] + H2O + H(+). It catalyses the reaction lathosterol + reduced [NADPH--hemoprotein reductase] + O2 = 5alpha-cholestan-7-oxo-3beta-ol + oxidized [NADPH--hemoprotein reductase] + H2O + H(+). It carries out the reaction 7-dehydrocholesterol + reduced [NADPH--hemoprotein reductase] + O2 = 7-oxocholesterol + oxidized [NADPH--hemoprotein reductase] + H2O + H(+). The catalysed reaction is (24S)-hydroxycholesterol + reduced [NADPH--hemoprotein reductase] + O2 = (24S)-7alpha-dihydroxycholesterol + oxidized [NADPH--hemoprotein reductase] + H2O + H(+). The enzyme catalyses (24R)-hydroxycholesterol + reduced [NADPH--hemoprotein reductase] + O2 = (24R)-7alpha-dihydroxycholesterol + oxidized [NADPH--hemoprotein reductase] + H2O + H(+). It functions in the pathway lipid metabolism; bile acid biosynthesis. It participates in steroid metabolism; cholesterol degradation. In terms of biological role, a cytochrome P450 monooxygenase involved in the metabolism of endogenous cholesterol and its oxygenated derivatives (oxysterols). Mechanistically, uses molecular oxygen inserting one oxygen atom into a substrate, and reducing the second into a water molecule, with two electrons provided by NADPH via cytochrome P450 reductase (CPR; NADPH-ferrihemoprotein reductase). Functions as a critical regulatory enzyme of bile acid biosynthesis and cholesterol homeostasis. Catalyzes the hydroxylation of carbon hydrogen bond at 7-alpha position of cholesterol, a rate-limiting step in cholesterol catabolism and bile acid biosynthesis. 7-alpha hydroxylates several oxysterols, including 4beta-hydroxycholesterol and 24-hydroxycholesterol. Catalyzes the oxidation of the 7,8 double bond of 7-dehydrocholesterol and lathosterol with direct and predominant formation of the 7-keto derivatives. The polypeptide is Cytochrome P450 7A1 (Mus musculus (Mouse)).